Reading from the N-terminus, the 707-residue chain is tRNA 5-methylaminomethyl-2-thiouridine biosynthesis bifunctional protein MnmC (707 aa).

The interval 1-264 is tRNA (mnm(5)s(2)U34)-methyltransferase; it reads MTKKLEHEYI…KREMLFGTFE (264 aa). Positions 312–707 are FAD-dependent cmnm(5)s(2)U34 oxidoreductase; the sequence is IGGGLAGAHA…LFRDLTRNRI (396 aa).

This sequence in the N-terminal section; belongs to the methyltransferase superfamily. tRNA (mnm(5)s(2)U34)-methyltransferase family. It in the C-terminal section; belongs to the DAO family. It depends on FAD as a cofactor.

It localises to the cytoplasm. The catalysed reaction is 5-aminomethyl-2-thiouridine(34) in tRNA + S-adenosyl-L-methionine = 5-methylaminomethyl-2-thiouridine(34) in tRNA + S-adenosyl-L-homocysteine + H(+). Catalyzes the last two steps in the biosynthesis of 5-methylaminomethyl-2-thiouridine (mnm(5)s(2)U) at the wobble position (U34) in tRNA. Catalyzes the FAD-dependent demodification of cmnm(5)s(2)U34 to nm(5)s(2)U34, followed by the transfer of a methyl group from S-adenosyl-L-methionine to nm(5)s(2)U34, to form mnm(5)s(2)U34. The sequence is that of tRNA 5-methylaminomethyl-2-thiouridine biosynthesis bifunctional protein MnmC from Saccharophagus degradans (strain 2-40 / ATCC 43961 / DSM 17024).